A 130-amino-acid polypeptide reads, in one-letter code: Fluoride-specific ion channel FluC (130 aa).

Transmembrane regions (helical) follow at residues 3–23 (FVFL…YFVG), 39–59 (GTFS…HLAV), 67–87 (FGIF…SYGL), and 102–122 (ISYV…GWFL). 2 residues coordinate Na(+): Gly77 and Thr80.

This sequence belongs to the fluoride channel Fluc/FEX (TC 1.A.43) family.

Its subcellular location is the cell inner membrane. It carries out the reaction fluoride(in) = fluoride(out). With respect to regulation, na(+) is not transported, but it plays an essential structural role and its presence is essential for fluoride channel function. Functionally, fluoride-specific ion channel. Important for reducing fluoride concentration in the cell, thus reducing its toxicity. In Helicobacter pylori (strain P12), this protein is Fluoride-specific ion channel FluC.